The sequence spans 66 residues: Large ribosomal subunit protein bL32 (66 aa).

A disordered region spans residues 1–20 (MAVPKRRKSKSKVRTKRAHH).

Belongs to the bacterial ribosomal protein bL32 family.

The protein is Large ribosomal subunit protein bL32 of Leptospira borgpetersenii serovar Hardjo-bovis (strain JB197).